Consider the following 275-residue polypeptide: Bis(5'-nucleosyl)-tetraphosphatase, symmetrical (275 aa).

Belongs to the Ap4A hydrolase family.

The catalysed reaction is P(1),P(4)-bis(5'-adenosyl) tetraphosphate + H2O = 2 ADP + 2 H(+). In terms of biological role, hydrolyzes diadenosine 5',5'''-P1,P4-tetraphosphate to yield ADP. In Hamiltonella defensa subsp. Acyrthosiphon pisum (strain 5AT), this protein is Bis(5'-nucleosyl)-tetraphosphatase, symmetrical.